The following is a 359-amino-acid chain: tRNA-specific 2-thiouridylase MnmA (359 aa).

Residues 6–13 and leucine 32 contribute to the ATP site; that span reads AMSGGVDS. Cysteine 97 serves as the catalytic Nucleophile. A disulfide bridge connects residues cysteine 97 and cysteine 195. ATP is bound at residue glycine 121. Residues 144-146 form an interaction with tRNA region; that stretch reads KDQ. The active-site Cysteine persulfide intermediate is the cysteine 195.

It belongs to the MnmA/TRMU family.

Its subcellular location is the cytoplasm. It catalyses the reaction S-sulfanyl-L-cysteinyl-[protein] + uridine(34) in tRNA + AH2 + ATP = 2-thiouridine(34) in tRNA + L-cysteinyl-[protein] + A + AMP + diphosphate + H(+). Its function is as follows. Catalyzes the 2-thiolation of uridine at the wobble position (U34) of tRNA, leading to the formation of s(2)U34. This Tropheryma whipplei (strain Twist) (Whipple's bacillus) protein is tRNA-specific 2-thiouridylase MnmA.